The following is a 283-amino-acid chain: Pantothenate synthetase (283 aa).

34-41 is a binding site for ATP; sequence MGALHDGH. The active-site Proton donor is the His-41. Gln-65 provides a ligand contact to (R)-pantoate. Gln-65 provides a ligand contact to beta-alanine. 152–155 lines the ATP pocket; the sequence is GQKD. Position 158 (Gln-158) interacts with (R)-pantoate. ATP-binding positions include Val-181 and 189–192; that span reads MSSR.

The protein belongs to the pantothenate synthetase family. In terms of assembly, homodimer.

Its subcellular location is the cytoplasm. It carries out the reaction (R)-pantoate + beta-alanine + ATP = (R)-pantothenate + AMP + diphosphate + H(+). It participates in cofactor biosynthesis; (R)-pantothenate biosynthesis; (R)-pantothenate from (R)-pantoate and beta-alanine: step 1/1. In terms of biological role, catalyzes the condensation of pantoate with beta-alanine in an ATP-dependent reaction via a pantoyl-adenylate intermediate. This is Pantothenate synthetase from Nitrobacter hamburgensis (strain DSM 10229 / NCIMB 13809 / X14).